A 275-amino-acid polypeptide reads, in one-letter code: Membrane protein insertase YidC 2 (275 aa).

A signal peptide spans 1 to 21 (MKKKNIILISVLLGALLLLTG). Residue Cys22 is the site of N-palmitoyl cysteine attachment. Cys22 carries the S-diacylglycerol cysteine lipid modification. 4 helical membrane-spanning segments follow: residues 48 to 68 (FVAKFVGGNYGIAIIITTLLI), 133 to 153 (QMGCLPLLIQMPILMAFYYAI), 174 to 194 (MVLAIIAGLVYLAQYFVSMIG), and 212 to 232 (IMILFVSFTAPSALALYWAVG).

The protein belongs to the OXA1/ALB3/YidC family. Type 2 subfamily.

The protein localises to the cell membrane. In terms of biological role, required for the insertion and/or proper folding and/or complex formation of integral membrane proteins into the membrane. Involved in integration of membrane proteins that insert both dependently and independently of the Sec translocase complex, as well as at least some lipoproteins. This is Membrane protein insertase YidC 2 from Listeria monocytogenes serotype 4b (strain F2365).